Here is a 352-residue protein sequence, read N- to C-terminus: Molybdenum import ATP-binding protein ModC (352 aa).

Residues 1–229 (MLELNFSQTL…SVMNPWLPKE (229 aa)) enclose the ABC transporter domain. 31–38 (GVSGAGKT) lines the ATP pocket. Residues 289-352 (QTSIRNVLRA…AQIKSVSITA (64 aa)) enclose the Mop domain.

It belongs to the ABC transporter superfamily. Molybdate importer (TC 3.A.1.8) family. In terms of assembly, the complex is composed of two ATP-binding proteins (ModC), two transmembrane proteins (ModB) and a solute-binding protein (ModA).

It is found in the cell inner membrane. It catalyses the reaction molybdate(out) + ATP + H2O = molybdate(in) + ADP + phosphate + H(+). Functionally, part of the ABC transporter complex ModABC involved in molybdenum import. Responsible for energy coupling to the transport system. The sequence is that of Molybdenum import ATP-binding protein ModC from Shigella flexneri.